Consider the following 346-residue polypeptide: 3',5'-cyclic-nucleotide phosphodiesterase (346 aa).

This sequence belongs to the cyclic nucleotide phosphodiesterase class-II family.

The catalysed reaction is a nucleoside 3',5'-cyclic phosphate + H2O = a nucleoside 5'-phosphate + H(+). This Schizosaccharomyces pombe (strain 972 / ATCC 24843) (Fission yeast) protein is 3',5'-cyclic-nucleotide phosphodiesterase (cgs2).